We begin with the raw amino-acid sequence, 62 residues long: Potassium channel toxin alpha-KTx 22.1 (62 aa).

A signal peptide spans 1-18 (MQKLFIVFVLFCILRLDA). Cystine bridges form between cysteine 28/cysteine 46, cysteine 33/cysteine 59, and cysteine 37/cysteine 61.

Belongs to the short scorpion toxin superfamily. Potassium channel inhibitor family. Alpha-KTx 22 subfamily. As to expression, expressed by the venom gland.

The protein resides in the secreted. Its function is as follows. May block potassium channels. This Olivierus martensii (Manchurian scorpion) protein is Potassium channel toxin alpha-KTx 22.1.